The sequence spans 252 residues: TLC domain-containing protein 1 (252 aa).

The signal sequence occupies residues 1–29; it reads MGPGWRAPSAALVGGSVALFGALRRAALA. Topologically, residues 30–47 are extracellular; sequence LPRPAAVRSRPGRVWRWR. Residues 41-235 enclose the TLC domain; sequence GRVWRWRNLL…LLRSDFFPSL (195 aa). A helical membrane pass occupies residues 48 to 68; it reads NLLVSFAHSVLAGLWALFSLW. Topologically, residues 69–84 are cytoplasmic; sequence QSPELLSDIQDGYSVS. The chain crosses the membrane as a helical span at residues 85–105; the sequence is GHLLVCFSSGYFIHDSLDIIF. Residues 106–124 lie on the Extracellular side of the membrane; it reads NQQSRSSWEYLVHHAMAIS. The helical intramembrane region spans 125 to 145; sequence AFVSLIITGRFLVAAMLLLLV. Topologically, residues 146-174 are extracellular; sequence EVSNIFLTIRMLLKMSNVPSPALYEANKY. A helical transmembrane segment spans residues 175–195; that stretch reads VNLVMYFAFRLAPQVYLTWYF. Over 196–202 the chain is Cytoplasmic; the sequence is VRYVEVQ. Residues 203–223 traverse the membrane as a helical segment; sequence GQGAFLMANLLLLDAMILMYF. The Extracellular segment spans residues 224-252; sequence SRLLRSDFFPSLRKGSVGRDVDGEKFLID.

In terms of assembly, interacts with CACNA1C in vitro; however the relevance of the interaction in vivo is unclear.

The protein resides in the cell membrane. Its function is as follows. Regulates the composition and fluidity of the plasma membrane. Inhibits the incorporation of membrane-fluidizing phospholipids containing omega-3 long-chain polyunsaturated fatty acids (LCPUFA) and thereby promotes membrane rigidity. Does not appear to have any effect on LCPUFA synthesis. The protein is TLC domain-containing protein 1 (TLCD1) of Gallus gallus (Chicken).